A 403-amino-acid polypeptide reads, in one-letter code: S-adenosylmethionine synthase (403 aa).

Residue histidine 15 coordinates ATP. Aspartate 17 provides a ligand contact to Mg(2+). Glutamate 43 lines the K(+) pocket. Positions 56 and 99 each coordinate L-methionine. The flexible loop stretch occupies residues 99–109 (QSPDINQGVDR). ATP is bound by residues 166–168 (DAK), 232–233 (KF), aspartate 241, 247–248 (RK), alanine 264, and lysine 268. An L-methionine-binding site is contributed by aspartate 241. Lysine 272 is an L-methionine binding site.

The protein belongs to the AdoMet synthase family. Homotetramer; dimer of dimers. The cofactor is Mg(2+). K(+) serves as cofactor.

It localises to the cytoplasm. It catalyses the reaction L-methionine + ATP + H2O = S-adenosyl-L-methionine + phosphate + diphosphate. The protein operates within amino-acid biosynthesis; S-adenosyl-L-methionine biosynthesis; S-adenosyl-L-methionine from L-methionine: step 1/1. Catalyzes the formation of S-adenosylmethionine (AdoMet) from methionine and ATP. The overall synthetic reaction is composed of two sequential steps, AdoMet formation and the subsequent tripolyphosphate hydrolysis which occurs prior to release of AdoMet from the enzyme. The sequence is that of S-adenosylmethionine synthase from Xylella fastidiosa (strain Temecula1 / ATCC 700964).